A 67-amino-acid polypeptide reads, in one-letter code: Cell division protein ZapB (67 aa).

Positions 3-59 form a coiled coil; it reads LELLSKLETKIQAALETIELLKMELEEEKQTSSSLSEQNQQLQQELTSWNEKVTGLV.

It belongs to the ZapB family. Homodimer. The ends of the coiled-coil dimer bind to each other, forming polymers. Interacts with FtsZ.

The protein resides in the cytoplasm. Functionally, non-essential, abundant cell division factor that is required for proper Z-ring formation. It is recruited early to the divisome by direct interaction with FtsZ, stimulating Z-ring assembly and thereby promoting cell division earlier in the cell cycle. Its recruitment to the Z-ring requires functional FtsA or ZipA. The polypeptide is Cell division protein ZapB (Shewanella halifaxensis (strain HAW-EB4)).